The following is a 211-amino-acid chain: MNKLIDFSKGLVPVILQHAQTDSVLMLGYMNEEAYQKTLKEKKVTFFSRSKQRLWTKGETSGHFQHVESIHLDCDQDAILIKVMPQGPTCHTGSLSCFNSEIESRFKIQALAQTIHQSAKANQSNSYTQYLLKEGIEKISKKFGEEAFEVVIGAIKHNREEVINETADVMYHLFVLLHSLDIPFSEVEQVLAHRHQKRNNFKGERKEVREW.

The interval 1-107 (MNKLIDFSKG…FNSEIESRFK (107 aa)) is phosphoribosyl-AMP cyclohydrolase. The phosphoribosyl-ATP pyrophosphohydrolase stretch occupies residues 108–211 (IQALAQTIHQ…KGERKEVREW (104 aa)).

This sequence in the N-terminal section; belongs to the PRA-CH family. The protein in the C-terminal section; belongs to the PRA-PH family.

The protein resides in the cytoplasm. It catalyses the reaction 1-(5-phospho-beta-D-ribosyl)-ATP + H2O = 1-(5-phospho-beta-D-ribosyl)-5'-AMP + diphosphate + H(+). The enzyme catalyses 1-(5-phospho-beta-D-ribosyl)-5'-AMP + H2O = 1-(5-phospho-beta-D-ribosyl)-5-[(5-phospho-beta-D-ribosylamino)methylideneamino]imidazole-4-carboxamide. Its pathway is amino-acid biosynthesis; L-histidine biosynthesis; L-histidine from 5-phospho-alpha-D-ribose 1-diphosphate: step 2/9. The protein operates within amino-acid biosynthesis; L-histidine biosynthesis; L-histidine from 5-phospho-alpha-D-ribose 1-diphosphate: step 3/9. The protein is Histidine biosynthesis bifunctional protein HisIE of Staphylococcus epidermidis (strain ATCC 35984 / DSM 28319 / BCRC 17069 / CCUG 31568 / BM 3577 / RP62A).